The primary structure comprises 49 residues: Large ribosomal subunit protein bL33B (49 aa).

It belongs to the bacterial ribosomal protein bL33 family.

The sequence is that of Large ribosomal subunit protein bL33B from Limosilactobacillus fermentum (strain NBRC 3956 / LMG 18251) (Lactobacillus fermentum).